Consider the following 85-residue polypeptide: Sec-independent protein translocase protein TatA (85 aa).

Residues 1–21 form a helical membrane-spanning segment; it reads MGSFSIWHWLIVLVIIMMVFG. Residues 39–51 are compositionally biased toward basic and acidic residues; sequence FKDGMREGQEDKP. The interval 39-85 is disordered; that stretch reads FKDGMREGQEDKPAGSQQPQQTAGQPPRELHDATTIDVEARDKSKQG. Positions 53 to 62 are enriched in polar residues; the sequence is GSQQPQQTAG. Positions 66-85 are enriched in basic and acidic residues; sequence RELHDATTIDVEARDKSKQG.

This sequence belongs to the TatA/E family. As to quaternary structure, the Tat system comprises two distinct complexes: a TatABC complex, containing multiple copies of TatA, TatB and TatC subunits, and a separate TatA complex, containing only TatA subunits. Substrates initially bind to the TatABC complex, which probably triggers association of the separate TatA complex to form the active translocon.

It is found in the cell inner membrane. Part of the twin-arginine translocation (Tat) system that transports large folded proteins containing a characteristic twin-arginine motif in their signal peptide across membranes. TatA could form the protein-conducting channel of the Tat system. In Ralstonia pickettii (strain 12J), this protein is Sec-independent protein translocase protein TatA.